A 146-amino-acid chain; its full sequence is Hemoglobin subunit delta (146 aa).

The Globin domain maps to 2-146 (HLTGDEKSAV…VATALAHKYH (145 aa)). S50 carries the post-translational modification Phosphoserine. Residues H63 and H92 each coordinate heme b.

The protein belongs to the globin family. As to quaternary structure, heterotetramer of two delta chains and two alpha chains. In terms of tissue distribution, red blood cells.

This chain is Hemoglobin subunit delta (HBD), found in Aotus trivirgatus (Three-striped night monkey).